A 327-amino-acid polypeptide reads, in one-letter code: Eukaryotic translation initiation factor 3 subunit I (327 aa).

5 WD repeats span residues 8–49, 51–89, 188–227, 229–268, and 285–324; these read GHER…GSYD, HNGAVWDIDVSWDTTKCVTASGDLTVKIWDAELGNCLYT, VHRYSVQDLQLSPRGDFLISASRDKTAALLDVNDLKKLKQ, KSERPVNSACISPNRDHICLGGGEDAMQVTQTSVSAGHFE, and GHFGPINTMAWHPSGTIIATGGEDGYIRIQEFDEDYLGFT.

This sequence belongs to the eIF-3 subunit I family. In terms of assembly, component of the eukaryotic translation initiation factor 3 (eIF-3) complex.

It is found in the cytoplasm. Component of the eukaryotic translation initiation factor 3 (eIF-3) complex, which is involved in protein synthesis of a specialized repertoire of mRNAs and, together with other initiation factors, stimulates binding of mRNA and methionyl-tRNAi to the 40S ribosome. The eIF-3 complex specifically targets and initiates translation of a subset of mRNAs involved in cell proliferation. In Caenorhabditis elegans, this protein is Eukaryotic translation initiation factor 3 subunit I.